The following is an 875-amino-acid chain: Phosphoenolpyruvate carboxylase (875 aa).

Residues His137 and Lys542 contribute to the active site.

The protein belongs to the PEPCase type 1 family. It depends on Mg(2+) as a cofactor.

It catalyses the reaction oxaloacetate + phosphate = phosphoenolpyruvate + hydrogencarbonate. Forms oxaloacetate, a four-carbon dicarboxylic acid source for the tricarboxylic acid cycle. This chain is Phosphoenolpyruvate carboxylase, found in Pseudomonas putida (strain GB-1).